The following is a 1205-amino-acid chain: MGNLKSVGQEPGPPCGLGLGLGLGLCGKQGPASPTSEPSRAPALAPPPSPPPAPDHSSPPLTRPPDGPKFPRVKNWEVGSITYDTLSAQSQQDGPCTPRRCLGSLVFPRKLQSRPSQNPAPPEQLLSQARDFISQYYSSIKRSGSQAHEQRLQEVEAEVAATGTYQLRESELVFGAKQAWRNAPRCVGRIQWGKLQVFDARDCSSAQEMFTYICNHIKYATNRGNLRSAITVFPQRASGRGDFRIWNSQLVRYAGYRQQDGSVRGDPANVEITELCIQHGWTPGNGRFDVLPLLLQAPDEPPELFALPPELVLEVPLEHPTLEWFAALGLRWYALPAVSNMLLEIGGLEFPAAPFSGWYMSTEIGTRNLCDPHRYNILEDVAVCMDLDTRTTSSLWKDKAAVEINLAVLHSYQLAKVTIVDHHAATASFMKHLENEQKARGGCPADWAWIVPPISGSLTPVFHQEMVNYVLSPAFRYQTDPWKGSASKGAGVTRKKTFKEVANAVKISASLMGTVMAKRVKATILYGSETGRAQSYAQQLGRLFRKAFDPRVLCMDEYDVVSLEHETLVLVVTSTFGNGDPPENGESFAAALMEMSGSYNSSPRPEQHKSYKIRFNSVSCSDPLVSSWRRKRKESRNTDSAGALGTLRFCVFGLGSRAYPHFCAFARAVDTRLEELGGERLLQLGQGDELCGQEEAFGGWAQAAFQASWETFCVGEDAKAAARDIFSPKRTWKRQRYRLSAQAEGLQLLPGLIHVHRRKMVQATVLAVENLQSSKSTRATILVRLDTGSQEALQYQPGDHIGICPPNRPGLVEALLSRVEDPPPPGEPVAVEQLEKGSPGGPPPSWVRDPRLPPCTLRQALTFFLDITSPPSPQLLRLLSTLAEESSEQQELESLSQDPRRYEEWKWFRCPTLLEVLEQFPSVALPAPLLLTQLPLLQPRYYSVSSAPSAHPGEIHLTVAVLAYRTQDGLGPLHYGVCSTWLSQLKAGDPVPCFIRGAPSFRLPPDPSLPCILVGPGTGIAPFRGFWQGRLHDIYSKGLQPAPMTLVFGCRCSQLDHLYRDEVQDAQQRGVFGRVLTAFSREPDSPKTYVQDILRTELAAEVHRVLCLERGHMFVCGDVTMATSVLQTVQRILATEGDMELDEAGDVIGVLRDQQRYHEDIFGLTLRTQEVTSRIRTQSFSLQERHLRGAVPWALDPPGPDTVGP.

Positions 1–73 are disordered; sequence MGNLKSVGQE…PPDGPKFPRV (73 aa). The N-myristoyl glycine moiety is linked to residue Gly2. 2 S-palmitoyl cysteine lipidation sites follow: Cys15 and Cys26. A compositionally biased stretch (gly residues) spans 15–27; it reads CGLGLGLGLGLCG. Over residues 44–54 the composition is skewed to pro residues; that stretch reads LAPPPSPPPAP. Zn(2+)-binding residues include Cys96 and Cys101. The interaction with NOSIP stretch occupies residues 100–488; it reads RCLGSLVFPR…TDPWKGSASK (389 aa). Ser104 provides a ligand contact to (6R)-L-erythro-5,6,7,8-tetrahydrobiopterin. Ser116 bears the Phosphoserine; by CDK5 mark. Cys186 lines the heme b pocket. The L-arginine site is built by Gln249, Trp358, Tyr359, Glu363, and Asn368. Residues Ala448, Trp449, and Phe462 each contribute to the (6R)-L-erythro-5,6,7,8-tetrahydrobiopterin site. Tyr477 is a binding site for heme b. The interval 492–512 is calmodulin-binding; that stretch reads VTRKKTFKEVANAVKISASLM. A Phosphothreonine; by AMPK modification is found at Thr497. The region spanning 522–705 is the Flavodoxin-like domain; sequence ATILYGSETG…AFGGWAQAAF (184 aa). Residues Ser528, Glu529, Thr530, Arg532, Ser574, and Thr575 each coordinate FMN. A phosphoserine mark is found at Ser617, Ser635, and Ser640. The FMN site is built by Ser656, Cys663, Glu689, and Gln693. In terms of domain architecture, FAD-binding FR-type spans 758-1004; it reads RKMVQATVLA…IRGAPSFRLP (247 aa). Residue Arg778 coordinates NADP(+). Position 800 (His800) interacts with FAD. Residues 819–850 are disordered; it reads VEDPPPPGEPVAVEQLEKGSPGGPPPSWVRDP. A Phosphoserine modification is found at Ser838. Residues Arg940, Tyr942, Ser943, Thr958, Ala960, Tyr964, Val977, Cys978, and Ser979 each coordinate FAD. Thr1018, Arg1051, Ser1080, Arg1081, Lys1087, Tyr1089, and Gln1091 together coordinate NADP(+). Phosphothreonine is present on Thr1177. Ser1179 is modified (phosphoserine; by AMPK). Ser1181 carries the phosphoserine modification.

It belongs to the NOS family. In terms of assembly, homodimer. Interacts with NOSIP and NOSTRIN. Interacts with HSP90AB1. Forms a complex with ASL, ASS1 and SLC7A1; the complex regulates cell-autonomous L-arginine synthesis and citrulline recycling while channeling extracellular L-arginine to nitric oxide synthesis pathway. It depends on heme b as a cofactor. FAD serves as cofactor. FMN is required as a cofactor. Requires (6R)-L-erythro-5,6,7,8-tetrahydrobiopterin as cofactor. Post-translationally, phosphorylation by AMPK at Ser-1179 in the presence of Ca(2+)-calmodulin (CaM) activates activity. In absence of Ca(2+)-calmodulin, AMPK also phosphorylates Thr-497, resulting in inhibition of activity. Phosphorylation of Ser-116 by CDK5 reduces activity.

The protein resides in the membrane. It is found in the caveola. It localises to the cytoplasm. Its subcellular location is the cytoskeleton. The protein localises to the golgi apparatus. The protein resides in the cell membrane. It catalyses the reaction 2 L-arginine + 3 NADPH + 4 O2 + H(+) = 2 L-citrulline + 2 nitric oxide + 3 NADP(+) + 4 H2O. Its activity is regulated as follows. Stimulated by calcium/calmodulin. Inhibited by NOSIP and NOSTRIN. Functionally, produces nitric oxide (NO) which is implicated in vascular smooth muscle relaxation through a cGMP-mediated signal transduction pathway. NO mediates vascular endothelial growth factor (VEGF)-induced angiogenesis in coronary vessels and promotes blood clotting through the activation of platelets. The chain is Nitric oxide synthase 3 (NOS3) from Canis lupus familiaris (Dog).